We begin with the raw amino-acid sequence, 631 residues long: RNA polymerase sigma factor RpoD (631 aa).

The tract at residues 395–465 (LIKANLRLVV…TRSISDQART (71 aa)) is sigma-70 factor domain-2. An Interaction with polymerase core subunit RpoC motif is present at residues 419 to 422 (DLVQ). A sigma-70 factor domain-3 region spans residues 474 to 550 (EQINRLNRET…DKAIKNPANH (77 aa)). The sigma-70 factor domain-4 stretch occupies residues 563 to 616 (ILGTLPEREQEVVKMRFGLEDGYSLTLEEVGLHFNVTRERIRQIESKALRRLKN). A DNA-binding region (H-T-H motif) is located at residues 589-608 (LEEVGLHFNVTRERIRQIES).

Belongs to the sigma-70 factor family. RpoD/SigA subfamily. Interacts transiently with the RNA polymerase catalytic core.

The protein localises to the cytoplasm. Functionally, sigma factors are initiation factors that promote the attachment of RNA polymerase to specific initiation sites and are then released. This sigma factor is the primary sigma factor during exponential growth. The chain is RNA polymerase sigma factor RpoD from Borreliella burgdorferi (strain ATCC 35210 / DSM 4680 / CIP 102532 / B31) (Borrelia burgdorferi).